We begin with the raw amino-acid sequence, 459 residues long: Inositol-trisphosphate 3-kinase A (459 aa).

A disordered region spans residues 1-26 (MTLPGHPTGMARPRGAGPCSPGLERA). Arg35, Arg55, and Arg62 each carry omega-N-methylarginine. Positions 49-164 (AAAGEPRARG…TSEDVGQKSH (116 aa)) are disordered. Over residues 116–132 (RRLSTSSLSSTGSSSLL) the composition is skewed to low complexity. Ser135 and Ser195 each carry phosphoserine. ATP-binding positions include Ser195, Lys207, 247–249 (QDL), and Asp260. 2 residues coordinate substrate: Lys262 and Arg283. The interval 285–293 (DMYKKMLAV) is calmodulin-binding. 310-317 (KPRYMQWR) contributes to the substrate binding site. Residues Lys334 and Asp414 each contribute to the ATP site. Lys417 contacts substrate.

The protein belongs to the inositol phosphokinase (IPK) family.

It is found in the cytoplasm. Its subcellular location is the cytoskeleton. It carries out the reaction 1D-myo-inositol 1,4,5-trisphosphate + ATP = 1D-myo-inositol 1,3,4,5-tetrakisphosphate + ADP + H(+). Activated by calcium/calmodulin. Its function is as follows. Catalyzes the phosphorylation of 1D-myo-inositol 1,4,5-trisphosphate (InsP3) into 1D-myo-inositol 1,3,4,5-tetrakisphosphate and participates to the regulation of calcium homeostasis. The sequence is that of Inositol-trisphosphate 3-kinase A from Rattus norvegicus (Rat).